Reading from the N-terminus, the 183-residue chain is Microfibrillar-associated protein 2 (183 aa).

The first 17 residues, 1–17 (MRAASLFLLFLPAGLLA), serve as a signal peptide directing secretion. Gln18 is subject to Pyrrolidone carboxylic acid. Gln20 is covalently cross-linked (Isoglutamyl lysine isopeptide (Gln-Lys) (interchain with K-?)). Sulfotyrosine is present on residues Tyr47, Tyr48, and Tyr50. The region spanning 153–183 (CRDKFSKCGVLASSGLCQSVAAACARSCGGC) is the ShKT domain. Cystine bridges form between Cys153–Cys183, Cys160–Cys176, and Cys169–Cys180.

The protein belongs to the MFAP family. Forms a ternary complex with BGN and ELN. Interacts with FBN1 (via N-terminal domain) and FBN2. O-glycosylated; glycans consist of Gal(beta1-3)GalNAc. In terms of processing, forms intermolecular disulfide bonds either with other MAGP-1 molecules or with other components of the microfibrils. Post-translationally, forms transglutaminase cross-links with tropoelastin.

The protein localises to the secreted. It localises to the extracellular space. The protein resides in the extracellular matrix. Its function is as follows. Component of the elastin-associated microfibrils. This Bos taurus (Bovine) protein is Microfibrillar-associated protein 2 (MFAP2).